Here is a 113-residue protein sequence, read N- to C-terminus: Integration host factor subunit alpha (113 aa).

This sequence belongs to the bacterial histone-like protein family. As to quaternary structure, heterodimer of an alpha and a beta chain.

In terms of biological role, this protein is one of the two subunits of integration host factor, a specific DNA-binding protein that functions in genetic recombination as well as in transcriptional and translational control. The polypeptide is Integration host factor subunit alpha (Rhodopseudomonas palustris (strain BisA53)).